Here is a 207-residue protein sequence, read N- to C-terminus: ADP-ribose pyrophosphatase (207 aa).

Residues 37–38 and Arg64 each bind substrate; that span reads RE. The Nudix hydrolase domain occupies 41–172; it reads EHFGAVAIVA…EIVNSIAIAG (132 aa). Ala76 provides a ligand contact to Mg(2+). The Nudix box signature appears at 77–99; sequence GLLDVAGEPPHLTAARELREEVG. Leu78 serves as a coordination point for substrate. Residues Glu93 and Glu97 each coordinate Mg(2+). Substrate contacts are provided by residues 114 to 116 and Glu120; that span reads APG. A Mg(2+)-binding site is contributed by Glu142. The Proton acceptor role is filled by Glu142.

Belongs to the Nudix hydrolase family. In terms of assembly, homodimer. Mg(2+) is required as a cofactor. Requires Mn(2+) as cofactor.

The enzyme catalyses ADP-D-ribose + H2O = D-ribose 5-phosphate + AMP + 2 H(+). The catalysed reaction is 8-oxo-dGDP + H2O = 8-oxo-dGMP + phosphate + H(+). It carries out the reaction 8-oxo-GDP + H2O = 8-oxo-GMP + phosphate + H(+). Catalyzes the hydrolysis of ADP-ribose (ADPR) to AMP and ribose-5-phosphate. Can also hydrolyze ADP-mannose and ADP-glucose, with lower efficiency. Has weaker activity with NAD, GDP-sugars and UDP-sugars. Also catalyzes the conversion of 8-oxo-dGDP to 8-oxo-dGMP, and 8-oxo-GDP to 8-oxo-GMP. Functions in concert with MutT1 to detoxify 8-oxo-dGTP to 8-oxo-dGMP and may play an important role in supporting cellular growth under oxidative stress. The catalytic efficiency is much higher for the hydrolysis of ADPR than 8-oxo-dGTP, suggesting a more relevant biological role in hydrolysis of ADPR. The protein is ADP-ribose pyrophosphatase of Mycobacterium tuberculosis (strain ATCC 25618 / H37Rv).